We begin with the raw amino-acid sequence, 458 residues long: tRNA-2-methylthio-N(6)-dimethylallyladenosine synthase (458 aa).

One can recognise an MTTase N-terminal domain in the interval 3 to 120; it reads QKLYIETFGC…LPSMLEQVRC (118 aa). The [4Fe-4S] cluster site is built by Cys-12, Cys-49, Cys-83, Cys-157, Cys-161, and Cys-164. In terms of domain architecture, Radical SAM core spans 143 to 375; that stretch reads RADGPKAFVS…QAKIADNAAK (233 aa). The 64-residue stretch at 378–441 folds into the TRAM domain; sequence ASMVGSIQSV…PNSLRGRLIG (64 aa).

Belongs to the methylthiotransferase family. MiaB subfamily. As to quaternary structure, monomer. [4Fe-4S] cluster is required as a cofactor.

It is found in the cytoplasm. It catalyses the reaction N(6)-dimethylallyladenosine(37) in tRNA + (sulfur carrier)-SH + AH2 + 2 S-adenosyl-L-methionine = 2-methylsulfanyl-N(6)-dimethylallyladenosine(37) in tRNA + (sulfur carrier)-H + 5'-deoxyadenosine + L-methionine + A + S-adenosyl-L-homocysteine + 2 H(+). Its function is as follows. Catalyzes the methylthiolation of N6-(dimethylallyl)adenosine (i(6)A), leading to the formation of 2-methylthio-N6-(dimethylallyl)adenosine (ms(2)i(6)A) at position 37 in tRNAs that read codons beginning with uridine. The protein is tRNA-2-methylthio-N(6)-dimethylallyladenosine synthase of Methylococcus capsulatus (strain ATCC 33009 / NCIMB 11132 / Bath).